A 207-amino-acid polypeptide reads, in one-letter code: Large ribosomal subunit protein uL4 (207 aa).

The tract at residues 50-75 (KTKTRSEVAGSGKKPFKQKGTGNARQ) is disordered.

It belongs to the universal ribosomal protein uL4 family. In terms of assembly, part of the 50S ribosomal subunit.

One of the primary rRNA binding proteins, this protein initially binds near the 5'-end of the 23S rRNA. It is important during the early stages of 50S assembly. It makes multiple contacts with different domains of the 23S rRNA in the assembled 50S subunit and ribosome. In terms of biological role, forms part of the polypeptide exit tunnel. This chain is Large ribosomal subunit protein uL4, found in Pelobacter propionicus (strain DSM 2379 / NBRC 103807 / OttBd1).